The following is a 483-amino-acid chain: Glycogen synthase (483 aa).

ADP-alpha-D-glucose is bound at residue K18.

The protein belongs to the glycosyltransferase 1 family. Bacterial/plant glycogen synthase subfamily.

The enzyme catalyses [(1-&gt;4)-alpha-D-glucosyl](n) + ADP-alpha-D-glucose = [(1-&gt;4)-alpha-D-glucosyl](n+1) + ADP + H(+). It functions in the pathway glycan biosynthesis; glycogen biosynthesis. In terms of biological role, synthesizes alpha-1,4-glucan chains using ADP-glucose. The chain is Glycogen synthase from Methylocella silvestris (strain DSM 15510 / CIP 108128 / LMG 27833 / NCIMB 13906 / BL2).